A 188-amino-acid polypeptide reads, in one-letter code: Pyridoxal 5'-phosphate synthase subunit PdxT (188 aa).

An L-glutamine-binding site is contributed by 46–48 (GES). Residue cysteine 78 is the Nucleophile of the active site. Residues arginine 105 and 134 to 135 (IR) each bind L-glutamine. Active-site charge relay system residues include histidine 170 and glutamate 172.

Belongs to the glutaminase PdxT/SNO family. As to quaternary structure, in the presence of PdxS, forms a dodecamer of heterodimers. Only shows activity in the heterodimer.

It carries out the reaction aldehydo-D-ribose 5-phosphate + D-glyceraldehyde 3-phosphate + L-glutamine = pyridoxal 5'-phosphate + L-glutamate + phosphate + 3 H2O + H(+). The catalysed reaction is L-glutamine + H2O = L-glutamate + NH4(+). It functions in the pathway cofactor biosynthesis; pyridoxal 5'-phosphate biosynthesis. In terms of biological role, catalyzes the hydrolysis of glutamine to glutamate and ammonia as part of the biosynthesis of pyridoxal 5'-phosphate. The resulting ammonia molecule is channeled to the active site of PdxS. The polypeptide is Pyridoxal 5'-phosphate synthase subunit PdxT (Thermotoga sp. (strain RQ2)).